The chain runs to 137 residues: Hemoglobin subunit beta (137 aa).

Positions 3 to 137 (HWTQEERDEI…VIDAISKQYH (135 aa)) constitute a Globin domain. Heme b contacts are provided by His-54 and His-83.

It belongs to the globin family. Heterotetramer of two alpha chains and two beta chains. In terms of tissue distribution, red blood cells.

Involved in oxygen transport from gills to the various peripheral tissues. The polypeptide is Hemoglobin subunit beta (HBB) (Mustelus griseus (Spotless smooth-hound)).